The chain runs to 345 residues: 4-hydroxy-3-methylbut-2-en-1-yl diphosphate synthase (flavodoxin) (345 aa).

4 residues coordinate [4Fe-4S] cluster: Cys-271, Cys-274, Cys-306, and Glu-313.

This sequence belongs to the IspG family. [4Fe-4S] cluster serves as cofactor.

It catalyses the reaction (2E)-4-hydroxy-3-methylbut-2-enyl diphosphate + oxidized [flavodoxin] + H2O + 2 H(+) = 2-C-methyl-D-erythritol 2,4-cyclic diphosphate + reduced [flavodoxin]. The protein operates within isoprenoid biosynthesis; isopentenyl diphosphate biosynthesis via DXP pathway; isopentenyl diphosphate from 1-deoxy-D-xylulose 5-phosphate: step 5/6. In terms of biological role, converts 2C-methyl-D-erythritol 2,4-cyclodiphosphate (ME-2,4cPP) into 1-hydroxy-2-methyl-2-(E)-butenyl 4-diphosphate. The polypeptide is 4-hydroxy-3-methylbut-2-en-1-yl diphosphate synthase (flavodoxin) (Haemophilus influenzae (strain PittEE)).